The sequence spans 629 residues: tRNA uridine 5-carboxymethylaminomethyl modification enzyme MnmG (629 aa).

FAD is bound by residues 13–18, Val125, and Ser180; that span reads GGGHAG. 273–287 provides a ligand contact to NAD(+); the sequence is GPRYCPSIEDKVMRF. Gln370 serves as a coordination point for FAD.

This sequence belongs to the MnmG family. In terms of assembly, homodimer. Heterotetramer of two MnmE and two MnmG subunits. FAD serves as cofactor.

Its subcellular location is the cytoplasm. In terms of biological role, NAD-binding protein involved in the addition of a carboxymethylaminomethyl (cmnm) group at the wobble position (U34) of certain tRNAs, forming tRNA-cmnm(5)s(2)U34. This Shigella dysenteriae serotype 1 (strain Sd197) protein is tRNA uridine 5-carboxymethylaminomethyl modification enzyme MnmG.